Reading from the N-terminus, the 361-residue chain is MKILVTGGAGFIGSAVVRHIINNTQDSVVNVDKLTYAGNRESLADVSDSERYVFEHADICDAPAMARIFAQHQPDAVMHLAAESHVDRSITGPAAFIETNIVGTYVLLEAARNYWSALDSDKKNSFRFHHISTDEVYGDLPHPDEVNNTEELPLFTETTAYAPSSPYSASKASSDHLVRAWKRTYGLPTIVTNCSNNYGPYHFPEKLIPLVILNALEGKALPIYGKGDQIRDWLYVEDHARALYTVVTEGKAGETYNIGGHNEKKNIDVVLTICDLLDEIVPKEKSYREQITYVADRPGHDRRYAIDAEKIGRALGWKPQETFESGIRKTVEWYLSNTKWVDNVKSGAYQSWIEQNYEGRQ.

NAD(+)-binding positions include 11-12, 32-35, 58-59, 80-84, and Thr-99; these read FI, DKLT, DI, and LAAES. Ser-84 contacts substrate. Residue Thr-133 coordinates substrate. The active-site Proton donor is Asp-134. Active-site proton acceptor residues include Glu-135 and Tyr-167. 167-171 provides a ligand contact to NAD(+); sequence YSASK. A substrate-binding site is contributed by Asn-196. Asn-197 is a binding site for NAD(+). Substrate-binding positions include 206–207, 222–224, Arg-231, Asn-266, and 296–300; these read KL, PIY, and DRPGH.

It belongs to the NAD(P)-dependent epimerase/dehydratase family. dTDP-glucose dehydratase subfamily. As to quaternary structure, homodimer. The cofactor is NAD(+).

It carries out the reaction dTDP-alpha-D-glucose = dTDP-4-dehydro-6-deoxy-alpha-D-glucose + H2O. It functions in the pathway carbohydrate biosynthesis; dTDP-L-rhamnose biosynthesis. The protein operates within bacterial outer membrane biogenesis; LPS O-antigen biosynthesis. In terms of biological role, catalyzes the dehydration of dTDP-D-glucose to form dTDP-6-deoxy-D-xylo-4-hexulose via a three-step process involving oxidation, dehydration and reduction. This Escherichia coli (strain K12) protein is dTDP-glucose 4,6-dehydratase 1 (rfbB).